We begin with the raw amino-acid sequence, 1064 residues long: MSHEHPAEIVHQLQSIDSIQQDLADTAAAVVDAASQSLPPQHAAQDQKSHSTLLDNAEAMESILESAIPAAPGSSSTAAASDAIGDNNFTASGPPPISNTVVAPSAADDETGDVIVVESETPTTTNVVEAVVNPENDGDVPIESTEQSSGQPAEQPTEQPTEQPTEQPAEQPAVETPQAPQSTPAAPAASAVESIPTTLEETHLEQIVQAPAPTVHTEPLTPVVDIKMEEKPMIEHVAWIPPQGIHSDVFLPEGLTEYSPSVSQNGELIRSWRADPSNPTLLLSLFNWAVQKTEVEDARAWYRVLAVDNPTAAQPLLALINLELALSNFAEVEAIFASTLKGSAGITTAADVSIWAAYLHYIRRQNPLTEGSANAADVRSTITEAYEFALRECGFDRESGDIWDEYIKFVASGPATNQWDTQAKNDNLRKIYQRAVCIPLNNIEALWKSYDNFESSLNKLTAKKYLAEKSPAYMTARTALRELRALSDPIPKPILPPYPTFTEQDRQVVGAWKACLRWEEGNPLVIENHELLQSRIGYALRKCLGEMRHFPELWHYAASYYSKLGKQDEAAEILEAGVNACPKSFLLTFAYAELQEERKAFPTCHSLYTTLISKLNPEVDELRQNVAREIDIARGPPIPGSEKAAVAAAVGDSIDADGNDISDIQRLVEEREQRGALVAQRRGKDIEELMVGISVVWIMYMRFARRAEGIKAARGVFGKARKSPHLTWQVFEASALMEYHTNKDAAVAIRIFELGLKQFSEDVDYVIKYLQFLLSINDDNNARALFERSVVRIMGDKARPLWDAWARYEYTYGDLSAVHKLEARMSEVFPEDAPLKRFAQRWSYNGIDQIAIRDLGFNRARMGVAAPPAFAIAPVLPPVHASIPAPIAVPTPVQPPQESYKRPAPEDIPPRRPSSAEFSRSPKRHRAQSPPRRYPERDDRPPPGRYRDSLPPVKAPSSIPPPPLAGPAYATPSSGAYGGDKDRSGLEKPLAWFMAQLPNARSFDGPVFRPDDIMKLFGGLSLPGAGMPPAPPISRGPPPPPMQSRGYYEPERDRRYGGHGSGRY.

Disordered regions lie at residues 34–106 (ASQS…APSA) and 119–192 (SETP…ASAV). A compositionally biased stretch (polar residues) spans 44 to 54 (AQDQKSHSTLL). Composition is skewed to low complexity over residues 66–86 (SAIPAAPGSSSTAAASDAIGD) and 151–191 (QPAE…AASA). HAT repeat units lie at residues 327-364 (SNFAEVEAIFASTLKGSAGITTAADVSIWAAYLHYIRR), 377-412 (DVRSTITEAYEFALRECGFDRESGDIWDEYIKFVAS), 423-456 (AKNDNLRKIYQRAVCIPLNNIEALWKSYDNFESS), 673-706 (QRGALVAQRRGKDIEELMVGISVVWIMYMRFARR), and 777-811 (NDDNNARALFERSVVRIMGDKARPLWDAWARYEYT). 2 disordered regions span residues 888–985 (AVPT…DRSG) and 1022–1064 (LPGA…SGRY). 2 stretches are compositionally biased toward basic and acidic residues: residues 899–910 (SYKRPAPEDIPP) and 933–948 (RYPERDDRPPPGRYRD). Over residues 1026–1042 (GMPPAPPISRGPPPPPM) the composition is skewed to pro residues.

It localises to the nucleus. The protein resides in the cytoplasm. Functionally, component of the cleavage factor IA (CFIA) complex, which is involved in the endonucleolytic cleavage during polyadenylation-dependent pre-mRNA 3'-end formation. The protein is mRNA 3'-end-processing protein RNA14 (RNA14) of Cryptococcus neoformans var. neoformans serotype D (strain B-3501A) (Filobasidiella neoformans).